The chain runs to 245 residues: DNA repair protein RecO (245 aa).

The protein belongs to the RecO family.

Functionally, involved in DNA repair and RecF pathway recombination. This Chromobacterium violaceum (strain ATCC 12472 / DSM 30191 / JCM 1249 / CCUG 213 / NBRC 12614 / NCIMB 9131 / NCTC 9757 / MK) protein is DNA repair protein RecO.